Consider the following 104-residue polypeptide: uncharacterized protein (104 aa).

Transmembrane regions (helical) follow at residues 45-65 (LYGI…IGVF) and 70-90 (LYLS…AKGL).

The protein resides in the membrane. This is an uncharacterized protein from Saccharomyces cerevisiae (strain ATCC 204508 / S288c) (Baker's yeast).